Reading from the N-terminus, the 307-residue chain is Transcriptional repressor scratch 2 (307 aa).

Positions 1-20 are SNAG domain; it reads MPRSFLVKKIKGDGFQCSGV. Disordered regions lie at residues 34–90 and 116–148; these read LPGA…PQSS and GRSRRRRGGGGGDAGGSGDAGGAGGRAGRAGAQ. Residues 124 to 148 are compositionally biased toward gly residues; sequence GGGGDAGGSGDAGGAGGRAGRAGAQ. C2H2-type zinc fingers lie at residues 155–177, 186–208, 212–234, and 240–262; these read HACAECGKTYATSSNLSRHKQTH, RKCPTCGKAYVSMPALAMHLLTH, HKCGVCGKAFSRPWLLQGHMRSH, and FGCAHCGKAFADRSNLRAHMQTH. A C2H2-type 5; atypical zinc finger spans residues 268 to 291; the sequence is YRCRQCDKSFALKSYLHKHCEAAC.

It belongs to the snail C2H2-type zinc-finger protein family.

It localises to the nucleus. In terms of biological role, may be involved in transcriptional regulation. The chain is Transcriptional repressor scratch 2 (SCRT2) from Homo sapiens (Human).